The chain runs to 52 residues: ATP synthase F(1) complex subunit epsilon, mitochondrial (52 aa).

An N6-acetyllysine; alternate mark is found at Lys-21, Lys-32, and Lys-37. N6-succinyllysine; alternate occurs at positions 21, 32, and 37. An N6-acetyllysine modification is found at Lys-44.

This sequence belongs to the eukaryotic ATPase epsilon family. In terms of assembly, component of the ATP synthase complex composed at least of ATP5F1A/subunit alpha, ATP5F1B/subunit beta, ATP5MC1/subunit c (homooctomer), MT-ATP6/subunit a, MT-ATP8/subunit 8, ATP5ME/subunit e, ATP5MF/subunit f, ATP5MG/subunit g, ATP5MK/subunit k, ATP5MJ/subunit j, ATP5F1C/subunit gamma, ATP5F1D/subunit delta, ATP5F1E/subunit epsilon, ATP5PF/subunit F6, ATP5PB/subunit b, ATP5PD/subunit d, ATP5PO/subunit OSCP. ATP synthase complex consists of a soluble F(1) head domain (subunits alpha(3) and beta(3)) - the catalytic core - and a membrane F(0) domain - the membrane proton channel (subunits c, a, 8, e, f, g, k and j). These two domains are linked by a central stalk (subunits gamma, delta, and epsilon) rotating inside the F1 region and a stationary peripheral stalk (subunits F6, b, d, and OSCP).

The protein localises to the mitochondrion. The protein resides in the mitochondrion inner membrane. Subunit epsilon, of the mitochondrial membrane ATP synthase complex (F(1)F(0) ATP synthase or Complex V) that produces ATP from ADP in the presence of a proton gradient across the membrane which is generated by electron transport complexes of the respiratory chain. ATP synthase complex consist of a soluble F(1) head domain - the catalytic core - and a membrane F(1) domain - the membrane proton channel. These two domains are linked by a central stalk rotating inside the F(1) region and a stationary peripheral stalk. During catalysis, ATP synthesis in the catalytic domain of F(1) is coupled via a rotary mechanism of the central stalk subunits to proton translocation. In vivo, can only synthesize ATP although its ATP hydrolase activity can be activated artificially in vitro. May be essential for the assembly of F(1) and may play an important role in the incorporation of the hydrophobic subunit c into the F(1)-c oligomer rotor of the mitochondrial ATP synthase complex. In Mus musculus (Mouse), this protein is ATP synthase F(1) complex subunit epsilon, mitochondrial.